Consider the following 152-residue polypeptide: D-aminoacyl-tRNA deacylase (152 aa).

A Gly-cisPro motif, important for rejection of L-amino acids motif is present at residues 142–143; sequence GP.

The protein belongs to the DTD family. In terms of assembly, homodimer.

It is found in the cytoplasm. It catalyses the reaction glycyl-tRNA(Ala) + H2O = tRNA(Ala) + glycine + H(+). The catalysed reaction is a D-aminoacyl-tRNA + H2O = a tRNA + a D-alpha-amino acid + H(+). Its function is as follows. An aminoacyl-tRNA editing enzyme that deacylates mischarged D-aminoacyl-tRNAs. Also deacylates mischarged glycyl-tRNA(Ala), protecting cells against glycine mischarging by AlaRS. Acts via tRNA-based rather than protein-based catalysis; rejects L-amino acids rather than detecting D-amino acids in the active site. By recycling D-aminoacyl-tRNA to D-amino acids and free tRNA molecules, this enzyme counteracts the toxicity associated with the formation of D-aminoacyl-tRNA entities in vivo and helps enforce protein L-homochirality. The polypeptide is D-aminoacyl-tRNA deacylase (Paraburkholderia phymatum (strain DSM 17167 / CIP 108236 / LMG 21445 / STM815) (Burkholderia phymatum)).